Here is a 567-residue protein sequence, read N- to C-terminus: Glutamate--tRNA ligase (567 aa).

The 'HIGH' region signature appears at 106-116 (PNPDGPLHLGN).

Belongs to the class-I aminoacyl-tRNA synthetase family. Glutamate--tRNA ligase type 2 subfamily.

Its subcellular location is the cytoplasm. The enzyme catalyses tRNA(Glu) + L-glutamate + ATP = L-glutamyl-tRNA(Glu) + AMP + diphosphate. Its function is as follows. Catalyzes the attachment of glutamate to tRNA(Glu) in a two-step reaction: glutamate is first activated by ATP to form Glu-AMP and then transferred to the acceptor end of tRNA(Glu). This chain is Glutamate--tRNA ligase, found in Sulfolobus acidocaldarius (strain ATCC 33909 / DSM 639 / JCM 8929 / NBRC 15157 / NCIMB 11770).